The chain runs to 242 residues: Haloacid dehalogenase-like hydrolase domain-containing protein 3 (242 aa).

It belongs to the HAD-like hydrolase superfamily.

In Danio rerio (Zebrafish), this protein is Haloacid dehalogenase-like hydrolase domain-containing protein 3 (hdhd3).